A 379-amino-acid polypeptide reads, in one-letter code: Histidinol-phosphate aminotransferase (379 aa).

K231 carries the N6-(pyridoxal phosphate)lysine modification.

Belongs to the class-II pyridoxal-phosphate-dependent aminotransferase family. Histidinol-phosphate aminotransferase subfamily. In terms of assembly, homodimer. Pyridoxal 5'-phosphate is required as a cofactor.

It carries out the reaction L-histidinol phosphate + 2-oxoglutarate = 3-(imidazol-4-yl)-2-oxopropyl phosphate + L-glutamate. It functions in the pathway amino-acid biosynthesis; L-histidine biosynthesis; L-histidine from 5-phospho-alpha-D-ribose 1-diphosphate: step 7/9. The protein is Histidinol-phosphate aminotransferase of Mycolicibacterium smegmatis (strain ATCC 700084 / mc(2)155) (Mycobacterium smegmatis).